The chain runs to 25 residues: Antimicrobial peptide THP3 (25 aa).

The protein localises to the secreted. Its function is as follows. Bactericidal activity; inhibits Staphylococcus aureus. The protein is Antimicrobial peptide THP3 of Meleagris gallopavo (Wild turkey).